Reading from the N-terminus, the 370-residue chain is ADP-ribosylhydrolase ARH3 (370 aa).

Mg(2+)-binding residues include E35, D66, and D67. D66 provides a ligand contact to substrate. Residues 135-141 (RGSFGNG), H171, L225, and I261 contribute to the substrate site. Positions 304, 306, and 307 each coordinate Mg(2+).

The protein belongs to the ADP-ribosylglycohydrolase family. As to quaternary structure, monomer. Mg(2+) is required as a cofactor.

It is found in the nucleus. The protein resides in the cytoplasm. The protein localises to the chromosome. Its subcellular location is the mitochondrion matrix. It carries out the reaction [(1''-&gt;2')-ADP-alpha-D-ribose](n) + H2O = [(1''-&gt;2')-ADP-alpha-D-ribose](n-1) + ADP-D-ribose. The enzyme catalyses 1''-O-acetyl-ADP-alpha-D-ribose + H2O = ADP-D-ribose + acetate + H(+). The catalysed reaction is O-(ADP-D-ribosyl)-L-seryl-[protein] + H2O = ADP-D-ribose + L-seryl-[protein]. It catalyses the reaction alpha-NAD(+) + H2O = ADP-D-ribose + nicotinamide + H(+). With respect to regulation, the protein undergoes a dramatic conformational switch from closed to open states upon substrate-binding, which enables specific substrate recognition for the 1''-O-linkage. The glutamate flap (Glu-35) blocks substrate entrance to Mg(2+) in the unliganded closed state. In presence of substrate, Glu-35 is ejected from the active site: this closed-to-open transition significantly widens the substrate-binding channel and precisely positions the scissile 1''-O-linkage for cleavage while securing tightly 2'- and 3'-hydroxyls of ADP-ribose. ADP-ribosylhydrolase that preferentially hydrolyzes the scissile alpha-O-linkage attached to the anomeric C1'' position of ADP-ribose and acts on different substrates, such as proteins ADP-ribosylated on serine and threonine, free poly(ADP-ribose) and O-acetyl-ADP-D-ribose. Specifically acts as a serine mono-ADP-ribosylhydrolase by mediating the removal of mono-ADP-ribose attached to serine residues on proteins, thereby playing a key role in DNA damage response. Serine ADP-ribosylation of proteins constitutes the primary form of ADP-ribosylation of proteins in response to DNA damage. Does not hydrolyze ADP-ribosyl-arginine, -cysteine, -diphthamide, or -asparagine bonds. Also able to degrade protein free poly(ADP-ribose), which is synthesized in response to DNA damage: free poly(ADP-ribose) acts as a potent cell death signal and its degradation by ADPRHL2 protects cells from poly(ADP-ribose)-dependent cell death, a process named parthanatos. Also hydrolyzes free poly(ADP-ribose) in mitochondria. Specifically digests O-acetyl-ADP-D-ribose, a product of deacetylation reactions catalyzed by sirtuins. Specifically degrades 1''-O-acetyl-ADP-D-ribose isomer, rather than 2''-O-acetyl-ADP-D-ribose or 3''-O-acetyl-ADP-D-ribose isomers. This Danio rerio (Zebrafish) protein is ADP-ribosylhydrolase ARH3 (adprs).